The sequence spans 864 residues: MRIDKITLTNFLSHEHSEIQFMGEINVIVGQNGAGKSSIIDGIVFSLFRTHSRGNNDNLIRKGSNRGSVTLYLSNEKDKIEIIRDIRSTTEDRLIRNQFPIARSATVVSNEIEKILGIDKDIALSTIIVRQGELDKILENFQEIMGKILKLELIEKLIDSRGPIVEFRKNLENKLRELDRIEQDYNNFKKTVEEKRARVLELKKDKEKLEDEIKNLEKRIKDIKDQFDEYEKKRNQYLKLTTTLKIKEGELNELNRSIEELRKQTENMDQLEKEINELENLRNIKLKFEKYEVLAKSHTEMSANVINLEKEIEEYEKAIRRKEELEPKYLKYKELERKLEELQPKYQQYLKLKSDLDSKLNLKERLEKDASELSNDIDKVNSLEQKVEETRKKQLNLRAQLAKVESLISEKNEIINNISQVEGETCPVCGRPLDEEHKQKIIKEAKSYILQLELNKNELEEELKKITNELNKIEREYRRLSNNKASYDNVMRQLKKLNEEIENLHSEIESLKNIDEEIKKINEEVKELKLYYEEFMRLSKYTKEELDKKRVKLDEMKKKKEEIEKEMRGLESELKGLDRKALESKILDLENKRVKLDEMKKKKGILEDYIRQVKLLQEEVKNLREEVNIIQFDENRYNELKTSLDAYNLSLKEKENRKSRIEGELESLEKDIEEISNRIANYELQLKDREKIINAINKLEKIRSALGERKLQSYIIMTTKQLIENNLNDIISKFDLSIKNVEMEIMPKTGRGRSSSGDILVYTNSGDTLPIVSLSGGERIALSIALRLAIAKALMSNTNFFILDEPTIHLDDQRKAYLIEIIRAAKESVPQIIVVTHDEEVVQAADYVIRVEKRGNKSFVREET.

ATP is bound by residues 32 to 38 and Gln131; that span reads NGAGKSS. Coiled-coil stretches lie at residues 176–319 and 376–413; these read RELD…EKAI and DIDK…EKNE. Positions 380 to 478 constitute a Zinc-hook domain; it reads VNSLEQKVEE…ELNKIEREYR (99 aa). Zn(2+) is bound by residues Cys426 and Cys429. Residues 440–697 are a coiled coil; it reads KIIKEAKSYI…DREKIINAIN (258 aa).

This sequence belongs to the SMC family. RAD50 subfamily. As to quaternary structure, homodimer. Forms a heterotetramer composed of two Mre11 subunits and two Rad50 subunits. Zn(2+) serves as cofactor.

Part of the Rad50/Mre11 complex, which is involved in the early steps of DNA double-strand break (DSB) repair. The complex may facilitate opening of the processed DNA ends to aid in the recruitment of HerA and NurA. Rad50 controls the balance between DNA end bridging and DNA resection via ATP-dependent structural rearrangements of the Rad50/Mre11 complex. The chain is DNA double-strand break repair Rad50 ATPase from Saccharolobus solfataricus (strain ATCC 35092 / DSM 1617 / JCM 11322 / P2) (Sulfolobus solfataricus).